The chain runs to 206 residues: Large ribosomal subunit protein mL40 (206 aa).

Residues 1 to 46 (MTASVLRSISLALRPTSGLLGTWQTQLRETHQRASLLSFWELIPMR) constitute a mitochondrion transit peptide. The disordered stretch occupies residues 168–192 (LFPFEKEGPHYTPPIPNYQPPEGRY).

The protein belongs to the mitochondrion-specific ribosomal protein mL40 family. Component of the mitochondrial large ribosomal subunit (mt-LSU). Mature mammalian 55S mitochondrial ribosomes consist of a small (28S) and a large (39S) subunit. The 28S small subunit contains a 12S ribosomal RNA (12S mt-rRNA) and 30 different proteins. The 39S large subunit contains a 16S rRNA (16S mt-rRNA), a copy of mitochondrial valine transfer RNA (mt-tRNA(Val)), which plays an integral structural role, and 52 different proteins. mL40 binds to the major groove of the anticodon stem of mt-tRNA(Val) in the central protuberance. In terms of tissue distribution, ubiquitous.

The protein resides in the mitochondrion. This chain is Large ribosomal subunit protein mL40 (MRPL40), found in Homo sapiens (Human).